Reading from the N-terminus, the 39-residue chain is Photosystem II reaction center protein J (39 aa).

Residues 7-27 traverse the membrane as a helical segment; sequence IPLWLVATIAGLGVIAVLGLF.

It belongs to the PsbJ family. PSII is composed of 1 copy each of membrane proteins PsbA, PsbB, PsbC, PsbD, PsbE, PsbF, PsbH, PsbI, PsbJ, PsbK, PsbL, PsbM, PsbT, PsbX, PsbY, PsbZ, Psb30/Ycf12, peripheral proteins PsbO, CyanoQ (PsbQ), PsbU, PsbV and a large number of cofactors. It forms dimeric complexes.

It localises to the cellular thylakoid membrane. One of the components of the core complex of photosystem II (PSII). PSII is a light-driven water:plastoquinone oxidoreductase that uses light energy to abstract electrons from H(2)O, generating O(2) and a proton gradient subsequently used for ATP formation. It consists of a core antenna complex that captures photons, and an electron transfer chain that converts photonic excitation into a charge separation. This is Photosystem II reaction center protein J from Microcystis aeruginosa (strain NIES-843 / IAM M-2473).